A 311-amino-acid polypeptide reads, in one-letter code: HPr kinase/phosphorylase (311 aa).

Residues His-136 and Lys-157 contribute to the active site. Gly-151–Ser-158 contributes to the ATP binding site. A Mg(2+)-binding site is contributed by Ser-158. Asp-175 acts as the Proton acceptor; for phosphorylation activity. Proton donor; for dephosphorylation activity in catalysis. Residues Leu-199–Asn-208 form an important for the catalytic mechanism of both phosphorylation and dephosphorylation region. Position 200 (Glu-200) interacts with Mg(2+). Arg-241 is an active-site residue. Positions Pro-262–Arg-267 are important for the catalytic mechanism of dephosphorylation.

The protein belongs to the HPrK/P family. Homohexamer. Mg(2+) is required as a cofactor.

It catalyses the reaction [HPr protein]-L-serine + ATP = [HPr protein]-O-phospho-L-serine + ADP + H(+). The enzyme catalyses [HPr protein]-O-phospho-L-serine + phosphate + H(+) = [HPr protein]-L-serine + diphosphate. Its function is as follows. Catalyzes the ATP- as well as the pyrophosphate-dependent phosphorylation of a specific serine residue in HPr, a phosphocarrier protein of the phosphoenolpyruvate-dependent sugar phosphotransferase system (PTS). HprK/P also catalyzes the pyrophosphate-producing, inorganic phosphate-dependent dephosphorylation (phosphorolysis) of seryl-phosphorylated HPr (P-Ser-HPr). The two antagonistic activities of HprK/P are regulated by several intracellular metabolites, which change their concentration in response to the absence or presence of rapidly metabolisable carbon sources (glucose, fructose, etc.) in the growth medium. Therefore, by controlling the phosphorylation state of HPr, HPrK/P is a sensor enzyme that plays a major role in the regulation of carbon metabolism and sugar transport: it mediates carbon catabolite repression (CCR), and regulates PTS-catalyzed carbohydrate uptake and inducer exclusion. This Staphylococcus haemolyticus (strain JCSC1435) protein is HPr kinase/phosphorylase.